The chain runs to 533 residues: Retinoid isomerohydrolase (533 aa).

Ser-2 is modified (N-acetylserine). Cys-112 is lipidated: S-palmitoyl cysteine; in membrane form. His-180 provides a ligand contact to Fe cation. Cys-231 carries S-palmitoyl cysteine; in membrane form lipidation. 2 residues coordinate Fe cation: His-241 and His-313. Residues Cys-329 and Cys-330 are each lipidated (S-palmitoyl cysteine; in membrane form). His-527 contributes to the Fe cation binding site.

This sequence belongs to the carotenoid oxygenase family. It depends on Fe(2+) as a cofactor. Palmitoylation by LRAT regulates ligand binding specificity; the palmitoylated form (membrane form) specifically binds all-trans-retinyl-palmitate, while the soluble unpalmitoylated form binds all-trans-retinol (vitamin A). In terms of tissue distribution, retinal pigment epithelium specific.

The protein resides in the cell membrane. It catalyses the reaction an all-trans-retinyl ester + H2O = 11-cis-retinol + a fatty acid + H(+). The enzyme catalyses lutein = (3R,3'S)-zeaxanthin. The catalysed reaction is all-trans-retinyl hexadecanoate + H2O = 11-cis-retinol + hexadecanoate + H(+). Functionally, critical isomerohydrolase in the retinoid cycle involved in regeneration of 11-cis-retinal, the chromophore of rod and cone opsins. Catalyzes the cleavage and isomerization of all-trans-retinyl fatty acid esters to 11-cis-retinol which is further oxidized by 11-cis retinol dehydrogenase to 11-cis-retinal for use as visual chromophore. Essential for the production of 11-cis retinal for both rod and cone photoreceptors. Also capable of catalyzing the isomerization of lutein to meso-zeaxanthin an eye-specific carotenoid. The soluble form binds vitamin A (all-trans-retinol), making it available for LRAT processing to all-trans-retinyl ester. The membrane form, palmitoylated by LRAT, binds all-trans-retinyl esters, making them available for IMH (isomerohydrolase) processing to all-cis-retinol. The soluble form is regenerated by transferring its palmitoyl groups onto 11-cis-retinol, a reaction catalyzed by LRAT. The polypeptide is Retinoid isomerohydrolase (RPE65) (Cynops pyrrhogaster (Japanese fire-bellied newt)).